A 339-amino-acid polypeptide reads, in one-letter code: Anthranilate phosphoribosyltransferase (339 aa).

5-phospho-alpha-D-ribose 1-diphosphate-binding positions include glycine 79, 82-83 (GD), threonine 87, 89-92 (NVST), 107-115 (KHGNRAVSS), and serine 119. Glycine 79 is an anthranilate binding site. A Mg(2+)-binding site is contributed by serine 91. Residue asparagine 110 coordinates anthranilate. Arginine 165 contributes to the anthranilate binding site. Mg(2+)-binding residues include aspartate 224 and glutamate 225.

This sequence belongs to the anthranilate phosphoribosyltransferase family. In terms of assembly, homodimer. Requires Mg(2+) as cofactor.

The enzyme catalyses N-(5-phospho-beta-D-ribosyl)anthranilate + diphosphate = 5-phospho-alpha-D-ribose 1-diphosphate + anthranilate. The protein operates within amino-acid biosynthesis; L-tryptophan biosynthesis; L-tryptophan from chorismate: step 2/5. In terms of biological role, catalyzes the transfer of the phosphoribosyl group of 5-phosphorylribose-1-pyrophosphate (PRPP) to anthranilate to yield N-(5'-phosphoribosyl)-anthranilate (PRA). The polypeptide is Anthranilate phosphoribosyltransferase (Geobacillus stearothermophilus (Bacillus stearothermophilus)).